A 443-amino-acid polypeptide reads, in one-letter code: Glutamyl-tRNA reductase (443 aa).

Substrate is bound by residues 49-52 (TCNR), S109, 114-116 (EQQ), and Q120. C50 acts as the Nucleophile in catalysis. Residue 189–194 (GAGSMG) participates in NADP(+) binding.

It belongs to the glutamyl-tRNA reductase family. Homodimer.

The enzyme catalyses (S)-4-amino-5-oxopentanoate + tRNA(Glu) + NADP(+) = L-glutamyl-tRNA(Glu) + NADPH + H(+). It participates in porphyrin-containing compound metabolism; protoporphyrin-IX biosynthesis; 5-aminolevulinate from L-glutamyl-tRNA(Glu): step 1/2. Catalyzes the NADPH-dependent reduction of glutamyl-tRNA(Glu) to glutamate 1-semialdehyde (GSA). This chain is Glutamyl-tRNA reductase, found in Mycobacteroides abscessus (strain ATCC 19977 / DSM 44196 / CCUG 20993 / CIP 104536 / JCM 13569 / NCTC 13031 / TMC 1543 / L948) (Mycobacterium abscessus).